A 157-amino-acid polypeptide reads, in one-letter code: Transcriptional repressor NrdR (157 aa).

The tract at residues 1 to 24 (MRCPKCGGNKSSVVDSRQAEDGNT) is disordered. A zinc finger spans residues 3 to 34 (CPKCGGNKSSVVDSRQAEDGNTIRRRRECEEC). In terms of domain architecture, ATP-cone spans 49 to 139 (LVVVKKDGTR…VYRSFKDVGE (91 aa)).

It belongs to the NrdR family. Zn(2+) serves as cofactor.

In terms of biological role, negatively regulates transcription of bacterial ribonucleotide reductase nrd genes and operons by binding to NrdR-boxes. This chain is Transcriptional repressor NrdR, found in Streptococcus sanguinis (strain SK36).